Reading from the N-terminus, the 102-residue chain is Thioredoxin (102 aa).

One can recognise a Thioredoxin domain in the interval 1-102 (MVQIVSQDNF…SLVKLISKHQ (102 aa)). Residues cysteine 28 and cysteine 31 are joined by a disulfide bond.

This sequence belongs to the thioredoxin family.

Functionally, participates in various redox reactions through the reversible oxidation of its active center dithiol to a disulfide and catalyzes dithiol-disulfide exchange reactions. This Chlamydia muridarum (strain MoPn / Nigg) protein is Thioredoxin (trxA).